The chain runs to 144 residues: Deoxyuridine 5'-triphosphate nucleotidohydrolase (144 aa).

Substrate is bound by residues 63 to 65 (RSG), Asn76, and 80 to 82 (TID).

The protein belongs to the dUTPase family. Mg(2+) is required as a cofactor.

The enzyme catalyses dUTP + H2O = dUMP + diphosphate + H(+). The protein operates within pyrimidine metabolism; dUMP biosynthesis; dUMP from dCTP (dUTP route): step 2/2. This enzyme is involved in nucleotide metabolism: it produces dUMP, the immediate precursor of thymidine nucleotides and it decreases the intracellular concentration of dUTP so that uracil cannot be incorporated into DNA. The chain is Deoxyuridine 5'-triphosphate nucleotidohydrolase from Alkaliphilus metalliredigens (strain QYMF).